The chain runs to 581 residues: Pectinesterase 3 (581 aa).

The N-terminal stretch at 1–55 is a signal peptide; the sequence is MDTIKSFKGYGKVNELEQQAYEKKTRKRLIIIAVSSIVLIAVIIAAVAGVVIHNR. Residues Asn101, Asn156, Asn200, Asn217, and Asn268 are each glycosylated (N-linked (GlcNAc...) asparagine). The substrate site is built by Thr348 and Gln378. Asp401 serves as the catalytic Proton donor. Cys415 and Cys435 form a disulfide bridge. The Nucleophile role is filled by Asp422. N-linked (GlcNAc...) asparagine glycosylation occurs at Asn477. Residues Arg486 and Trp488 each contribute to the substrate site.

This sequence in the N-terminal section; belongs to the PMEI family. In the C-terminal section; belongs to the pectinesterase family.

Its subcellular location is the secreted. It is found in the cell wall. The enzyme catalyses [(1-&gt;4)-alpha-D-galacturonosyl methyl ester](n) + n H2O = [(1-&gt;4)-alpha-D-galacturonosyl](n) + n methanol + n H(+). Its pathway is glycan metabolism; pectin degradation; 2-dehydro-3-deoxy-D-gluconate from pectin: step 1/5. Functionally, may have roles in the deposition of pectin in developing tissues and in the wall loosening and cell separation that occurs in cell expansion, fruit ripening and abscission. The chain is Pectinesterase 3 (MPE3) from Phaseolus vulgaris (Kidney bean).